The following is a 1923-amino-acid chain: Callose synthase 5 (1923 aa).

Residues 1-10 (MAQSSTSHDS) are compositionally biased toward polar residues. Residues 1–22 (MAQSSTSHDSGPQGLMRRPSRS) form a disordered region. Over 1-481 (MAQSSTSHDS…ETRTFWHIYH (481 aa)) the chain is Cytoplasmic. The chain crosses the membrane as a helical span at residues 482–502 (SFDRLWTFYLLALQAMIILAF). Over 503 to 521 (ERVELREILRKDVLYALSS) the chain is Extracellular. Residues 522–542 (IFITAAFLRFLQSVLDVILNF) form a helical membrane-spanning segment. The Cytoplasmic segment spans residues 543 to 559 (PGFHRWKFTDVLRNILK). A helical membrane pass occupies residues 560-580 (IVVSLAWCVVLPLCYAQSVSF). Over 581 to 601 (APGKLKQWLSFLPQVKGVPPL) the chain is Extracellular. The chain crosses the membrane as a helical span at residues 602–622 (YIMAVALYLLPNVLAAIMFIF). Residues 623 to 658 (PMLRRWIENSDWHIFRLLLWWSQPRIYVGRGMHESQ) lie on the Cytoplasmic side of the membrane. Residues 659–679 (IALIKYTIFWLLLFCCKFAFS) form a helical membrane-spanning segment. Residues 680 to 719 (YFLQVKLLVKPTNAIMSIRHVKYKWHEFFPNAEHNYGAVV) are Extracellular-facing. Residues 720–740 (SLWLPVILVYFMDTQIWYAIF) form a helical membrane-spanning segment. Over 741-1486 (STICGGVIGA…FDFFRMMSCY (746 aa)) the chain is Cytoplasmic. Residues 1487 to 1507 (FTTVGFYISSMIVVLTVYAFL) form a helical membrane-spanning segment. Residues 1508 to 1535 (YGRLYLSLSGVEEAIVKFAAAKGDSSLK) are Extracellular-facing. A helical membrane pass occupies residues 1536 to 1556 (AAMASQSVVQLGLLMTLPMVM). The Cytoplasmic segment spans residues 1557–1566 (EIGLERGFRT). A helical transmembrane segment spans residues 1567-1587 (ALSDLIIMQLQLAPVFFTFSL). Topologically, residues 1588 to 1630 (GTKVHYYGRTILHGGSKYRATGRGFVVKHEKFAENYRMYSRSH) are extracellular. A helical membrane pass occupies residues 1631–1651 (FVKGMELMVLLICYRIYGKAA). Residues 1652–1657 (EDSVGY) lie on the Cytoplasmic side of the membrane. Residues 1658–1678 (ALVMGSTWFLVGSWLFAPFFF) form a helical membrane-spanning segment. Residues 1679 to 1732 (NPSGFEWQKIVDDWDDWNKWISSRGGIGVPANKSWESWWEEEQEHLLHSGFFGK) lie on the Extracellular side of the membrane. N-linked (GlcNAc...) asparagine glycosylation is present at Asn-1710. The helical transmembrane segment at 1733–1755 (FWEIFLSLRYFIYQYGIVYQLNL) threads the bilayer. Residues 1756-1766 (TKESRMGKQHS) lie on the Cytoplasmic side of the membrane. A helical membrane pass occupies residues 1767-1787 (IIVYGLSWLVIVAVMIVLKIV). At 1788 to 1803 (SMGRKKFSADFQLMFR) the chain is on the extracellular side. Residues 1804–1824 (LLKLFLFIGSVVIVGMLFHFL) traverse the membrane as a helical segment. Lys-1825 is a topological domain (cytoplasmic). The chain crosses the membrane as a helical span at residues 1826 to 1846 (LTVGDIMQSLLAFLPTGWALL). The Extracellular portion of the chain corresponds to 1847-1873 (QISQVARPLMKTVGMWGSVKALARGYE). A helical transmembrane segment spans residues 1874–1894 (YIMGVVIFMPVTVLAWFPFVS). Over 1895–1923 (EFQTRLLFNQAFSRGLQIQRILAGGKKQK) the chain is Cytoplasmic.

It belongs to the glycosyltransferase 48 family.

The protein resides in the cell membrane. It carries out the reaction [(1-&gt;3)-beta-D-glucosyl](n) + UDP-alpha-D-glucose = [(1-&gt;3)-beta-D-glucosyl](n+1) + UDP + H(+). Functionally, required for the formation of the callose wall separating the tetraspores (interstitial wall) and surrounding the pollen mother cells (peripheral wall). Required for exine formation on pollen wall. May be involved in callose synthesis during pollen tube growth. During plant growth and development, callose is found as a transitory component of the cell plate in dividing cells, is a major component of pollen mother cell walls and pollen tubes, and is found as a structural component of plasmodesmatal canals. The sequence is that of Callose synthase 5 (CALS5) from Arabidopsis thaliana (Mouse-ear cress).